The primary structure comprises 1044 residues: AT-rich interactive domain-containing protein 5B (1044 aa).

Disordered stretches follow at residues 143–211 (PRKK…GDEC), 301–350 (RFTK…GDKD), 363–392 (MEEL…LTED), 554–591 (NNYP…SSVE), 603–672 (QHAQ…SFLS), 733–767 (SQKE…LSTS), 811–835 (VSAS…RGEE), and 884–912 (TPLH…KPAE). 3 stretches are compositionally biased toward basic and acidic residues: residues 197 to 211 (VQSE…GDEC), 301 to 310 (RFTKGEEDKP), and 337 to 350 (RPKD…GDKD). The ARID domain occupies 212–304 (RTDEQAFLVA…LILPYERFTK (93 aa)). The segment covering 369–380 (KQNSQQLQAPTQ) has biased composition (polar residues). Positions 565-591 (VSRRLSSSGTEVSSAGQSSSQVSSSVE) are enriched in low complexity. 3 stretches are compositionally biased toward basic and acidic residues: residues 611 to 635 (RGSE…EPVH), 644 to 660 (PYLK…KSAE), and 733 to 746 (SQKE…RVTE). Residues 752 to 767 (LSLPKSSPLKLPLSTS) are compositionally biased toward low complexity. 2 stretches are compositionally biased toward basic and acidic residues: residues 816-826 (KVTESHSKVLE) and 894-909 (LPGK…ESVK).

It belongs to the ARID5B family.

It localises to the nucleus. Functionally, transcription coactivator that binds to the 5'-AATA[CT]-3' core sequence and plays a key role in adipogenesis and liver development. Required for adipogenesis: regulates triglyceride metabolism in adipocytes by regulating expression of adipogenic genes. In Danio rerio (Zebrafish), this protein is AT-rich interactive domain-containing protein 5B (arid5b).